The sequence spans 266 residues: Undecaprenyl-diphosphatase (266 aa).

The next 8 helical transmembrane spans lie at 1 to 21, 39 to 59, 87 to 107, 111 to 131, 143 to 163, 186 to 206, 217 to 237, and 243 to 263; these read MTWL…FLPI, QGLA…MVYF, WAVI…DSWI, LRSA…LGMA, FTLK…IPGT, FSFL…GLEL, EIAG…HLFL, and IGFM…LVWL.

This sequence belongs to the UppP family.

It is found in the cell inner membrane. The catalysed reaction is di-trans,octa-cis-undecaprenyl diphosphate + H2O = di-trans,octa-cis-undecaprenyl phosphate + phosphate + H(+). Its function is as follows. Catalyzes the dephosphorylation of undecaprenyl diphosphate (UPP). Confers resistance to bacitracin. The sequence is that of Undecaprenyl-diphosphatase from Hahella chejuensis (strain KCTC 2396).